Reading from the N-terminus, the 38-residue chain is Large ribosomal subunit protein bL36 (38 aa).

Belongs to the bacterial ribosomal protein bL36 family.

The polypeptide is Large ribosomal subunit protein bL36 (Stutzerimonas stutzeri (strain A1501) (Pseudomonas stutzeri)).